A 371-amino-acid polypeptide reads, in one-letter code: Probable F-box protein At1g65740 (371 aa).

Residues 2 to 49 (VDWSTLPEELLHFIAARSFSLVEYKRFSSICVSWHSSVSGVKKNPFHR) enclose the F-box domain.

The protein is Probable F-box protein At1g65740 of Arabidopsis thaliana (Mouse-ear cress).